The primary structure comprises 418 residues: Alpha-tubulin N-acetyltransferase 1 (418 aa).

In terms of domain architecture, N-acetyltransferase spans 1–186 (MEFEFDVHKI…NNFVVFEGFF (186 aa)). Residues 120 to 133 (FYIH…GFGK) and 156 to 165 (SEKFLSFLRK) each bind acetyl-CoA. 2 disordered regions span residues 237–292 (SSLG…MNLS) and 322–353 (QIKE…HQND). The segment covering 277–287 (QEDHSQRRRTS) has biased composition (basic and acidic residues). The segment covering 329-353 (RTDSSAQEGRTQDRPNGSNSQHQND) has biased composition (polar residues).

Belongs to the acetyltransferase ATAT1 family.

It is found in the cytoplasm. The protein localises to the membrane. It localises to the clathrin-coated pit. Its subcellular location is the cell junction. The protein resides in the focal adhesion. It is found in the cell projection. The protein localises to the axon. It localises to the cytoskeleton. Its subcellular location is the spindle. It carries out the reaction L-lysyl-[alpha-tubulin] + acetyl-CoA = N(6)-acetyl-L-lysyl-[alpha-tubulin] + CoA + H(+). Functionally, specifically acetylates 'Lys-40' in alpha-tubulin on the lumenal side of microtubules. Promotes microtubule destabilization and accelerates microtubule dynamics; this activity may be independent of acetylation activity. Acetylates alpha-tubulin with a slow enzymatic rate, due to a catalytic site that is not optimized for acetyl transfer. Enters the microtubule through each end and diffuses quickly throughout the lumen of microtubules. Acetylates only long/old microtubules because of its slow acetylation rate since it does not have time to act on dynamically unstable microtubules before the enzyme is released. May be involved in neuron development. This Xenopus laevis (African clawed frog) protein is Alpha-tubulin N-acetyltransferase 1.